A 208-amino-acid polypeptide reads, in one-letter code: Large ribosomal subunit protein bL25 (208 aa).

It belongs to the bacterial ribosomal protein bL25 family. CTC subfamily. In terms of assembly, part of the 50S ribosomal subunit; part of the 5S rRNA/L5/L18/L25 subcomplex. Contacts the 5S rRNA. Binds to the 5S rRNA independently of L5 and L18.

Functionally, this is one of the proteins that binds to the 5S RNA in the ribosome where it forms part of the central protuberance. The sequence is that of Large ribosomal subunit protein bL25 from Phenylobacterium zucineum (strain HLK1).